Here is a 432-residue protein sequence, read N- to C-terminus: Enolase (432 aa).

Glutamine 167 contacts (2R)-2-phosphoglycerate. Glutamate 209 (proton donor) is an active-site residue. Residues aspartate 246, glutamate 291, and aspartate 318 each contribute to the Mg(2+) site. The (2R)-2-phosphoglycerate site is built by lysine 343, arginine 372, serine 373, and lysine 394. Residue lysine 343 is the Proton acceptor of the active site.

It belongs to the enolase family. Component of the RNA degradosome, a multiprotein complex involved in RNA processing and mRNA degradation. Mg(2+) serves as cofactor.

The protein localises to the cytoplasm. Its subcellular location is the secreted. The protein resides in the cell surface. It carries out the reaction (2R)-2-phosphoglycerate = phosphoenolpyruvate + H2O. It participates in carbohydrate degradation; glycolysis; pyruvate from D-glyceraldehyde 3-phosphate: step 4/5. Its function is as follows. Catalyzes the reversible conversion of 2-phosphoglycerate (2-PG) into phosphoenolpyruvate (PEP). It is essential for the degradation of carbohydrates via glycolysis. The chain is Enolase from Buchnera aphidicola subsp. Cinara cedri (strain Cc).